The following is a 124-amino-acid chain: Small ribosomal subunit protein uS12cz/uS12cy (124 aa).

The protein belongs to the universal ribosomal protein uS12 family. As to quaternary structure, part of the 30S ribosomal subunit.

Its subcellular location is the plastid. It is found in the chloroplast. Functionally, with S4 and S5 plays an important role in translational accuracy. Located at the interface of the 30S and 50S subunits. The protein is Small ribosomal subunit protein uS12cz/uS12cy (rps12-A) of Agrostis stolonifera (Creeping bentgrass).